The sequence spans 244 residues: Phosphoadenosine 5'-phosphosulfate reductase (244 aa).

Cys-239 functions as the Nucleophile; cysteine thiosulfonate intermediate in the catalytic mechanism.

It belongs to the PAPS reductase family. CysH subfamily.

It is found in the cytoplasm. It catalyses the reaction [thioredoxin]-disulfide + sulfite + adenosine 3',5'-bisphosphate + 2 H(+) = [thioredoxin]-dithiol + 3'-phosphoadenylyl sulfate. The protein operates within sulfur metabolism; hydrogen sulfide biosynthesis; sulfite from sulfate: step 3/3. Its function is as follows. Catalyzes the formation of sulfite from phosphoadenosine 5'-phosphosulfate (PAPS) using thioredoxin as an electron donor. This Escherichia coli O81 (strain ED1a) protein is Phosphoadenosine 5'-phosphosulfate reductase.